The primary structure comprises 450 residues: Chromosomal replication initiator protein DnaA (450 aa).

A domain I, interacts with DnaA modulators region spans residues 1–76 (MNLNDILKEL…KKILKQPVNI (76 aa)). The domain II stretch occupies residues 76-107 (ISFTYEQEYQKQLEKTESINKDHSDIISKKNK). The tract at residues 108-327 (KVNENTFENF…GSVSRLNFWS (220 aa)) is domain III, AAA+ region. 4 residues coordinate ATP: G151, G153, K154, and T155. Positions 328–450 (QQNPEEKVIT…DILKNKILTK (123 aa)) are domain IV, binds dsDNA.

The protein belongs to the DnaA family. Oligomerizes as a right-handed, spiral filament on DNA at oriC.

It localises to the cytoplasm. The protein localises to the cell membrane. In terms of biological role, plays an essential role in the initiation and regulation of chromosomal replication. ATP-DnaA binds to the origin of replication (oriC) to initiate formation of the DNA replication initiation complex once per cell cycle. Binds the DnaA box (a 9 base pair repeat at the origin) and separates the double-stranded (ds)DNA. Forms a right-handed helical filament on oriC DNA; dsDNA binds to the exterior of the filament while single-stranded (ss)DNA is stabiized in the filament's interior. The ATP-DnaA-oriC complex binds and stabilizes one strand of the AT-rich DNA unwinding element (DUE), permitting loading of DNA polymerase. After initiation quickly degrades to an ADP-DnaA complex that is not apt for DNA replication. Binds acidic phospholipids. This is Chromosomal replication initiator protein DnaA from Mycoplasma capricolum subsp. capricolum (strain California kid / ATCC 27343 / NCTC 10154).